Reading from the N-terminus, the 990-residue chain is Kinesin-related protein 5 (990 aa).

Residues 6 to 330 (NIRVMCRFRP…LKFGARAKSI (325 aa)) enclose the Kinesin motor domain. 83–90 (GQTGSGKT) contributes to the ATP binding site. Disordered regions lie at residues 401-485 (QSNS…SSID) and 732-788 (FSSS…QDQQ). Residues 406-418 (SGGGGSGSSGGSS) are compositionally biased toward gly residues. Low complexity-rich tracts occupy residues 466 to 485 (TSSI…SSID) and 733 to 781 (SSSN…PSSN). Residues 513–948 (IEMEKMKEDT…DQLISTQRLI (436 aa)) are a coiled coil.

Belongs to the TRAFAC class myosin-kinesin ATPase superfamily. Kinesin family. Kinesin subfamily. In terms of assembly, interacts with actin.

It is found in the cytoplasm. The protein resides in the cytoskeleton. Functionally, microtubule-associated force-producing protein that plays a role in organelle transport. Its motor activity is directed toward the microtubule's plus end. May connect microtubules to actin filaments. Associates with actin-based structures in cells and is likely involved in the organization of actin cytoskeletons in such structures. This is Kinesin-related protein 5 (kif5) from Dictyostelium discoideum (Social amoeba).